Reading from the N-terminus, the 221-residue chain is Peptide methionine sulfoxide reductase MsrA (221 aa).

C54 is an active-site residue.

Belongs to the MsrA Met sulfoxide reductase family.

It catalyses the reaction L-methionyl-[protein] + [thioredoxin]-disulfide + H2O = L-methionyl-(S)-S-oxide-[protein] + [thioredoxin]-dithiol. It carries out the reaction [thioredoxin]-disulfide + L-methionine + H2O = L-methionine (S)-S-oxide + [thioredoxin]-dithiol. In terms of biological role, has an important function as a repair enzyme for proteins that have been inactivated by oxidation. Catalyzes the reversible oxidation-reduction of methionine sulfoxide in proteins to methionine. This is Peptide methionine sulfoxide reductase MsrA from Methylobacterium nodulans (strain LMG 21967 / CNCM I-2342 / ORS 2060).